The primary structure comprises 579 residues: Folliculin (579 aa).

The tract at residues 32 to 82 (GAGSGDGAGRGEPADEEEGGIQMSSRIRAHSPAEGASAESSSPGPKKSDMC) is disordered. Ser-62 and Ser-73 each carry phosphoserine. Low complexity predominate over residues 63 to 76 (PAEGASAESSSPGP). One can recognise a uDENN FLCN/SMCR8-type domain in the interval 86–242 (RSLAAGHPGY…RNGNAARSLT (157 aa)). The stretch at 285-309 (QMEQLAELEEESESWDNSEAEEEEK) forms a coiled coil. Residues 294 to 308 (EESESWDNSEAEEEE) are compositionally biased toward acidic residues. The interval 294-321 (EESESWDNSEAEEEEKGPALPEGAEGRE) is disordered. Ser-302, Ser-406, Ser-537, Ser-542, and Ser-571 each carry phosphoserine. The 153-residue stretch at 339-491 (QPRKLSVFKS…ILNKMEAALT (153 aa)) folds into the cDENN FLCN/SMCR8-type domain. Positions 493-558 (QNLSVDVVDQ…LLKFWMTGLS (66 aa)) constitute a dDENN FLCN/SMCR8-type domain.

The protein belongs to the folliculin family. Interacts (via C-terminus) with FNIP1 or FNIP2 (via C-terminus). Component of the lysosomal folliculin complex (LFC), composed of FLCN, FNIP1 (or FNIP2), RagA/RRAGA or RagB/RRAGB GDP-bound, RagC/RRAGC or RagD/RRAGD GTP-bound, and Ragulator. Interaction with FNIP1 or FNIP2 mediates indirect interaction with the PRKAA1, PRKAB1 and PRKAG1 subunits of 5'-AMP-activated protein kinase (AMPK). Interacts with HSP90AA1 in the presence of FNIP1. Interacts with HSP70, STUB1, CDC37, AHSA1, CCT2, STIP1, PTGES3 and PPP5C. Interacts with GABARAP; interaction takes place in the presence of FNIP1 and/or FNIP2. Interacts with RILP; the interaction is direct and promotes association between RILP and RAB34. Interacts with KIF3A and KIF3B. Interacts with lactate dehydrogenase LDHA, but not LDHB; the interaction is direct, may preferentially bind LDHA dimers rather than tetramers, and regulates LDHA activity, acting as an uncompetitive inhibitor. Phosphorylation by ULK1 modulates the interaction with GABARAP and is required to regulate autophagy.

The protein localises to the lysosome membrane. Its subcellular location is the cytoplasm. It localises to the cytosol. The protein resides in the cell projection. It is found in the cilium. The protein localises to the cytoskeleton. Its subcellular location is the microtubule organizing center. It localises to the centrosome. The protein resides in the spindle. It is found in the nucleus. With respect to regulation, GTPase-activating activity is inhibited in the folliculin complex (LFC), which stabilizes the GDP-bound state of RagA/RRAGA (or RagB/RRAGB), because Arg-164 is located far from the RagC/RRAGC or RagD/RRAGD nucleotide pocket. Disassembly of the LFC complex upon amino acid restimulation liberates the GTPase-activating activity. Its function is as follows. Multi-functional protein, involved in both the cellular response to amino acid availability and in the regulation of glycolysis. GTPase-activating protein that plays a key role in the cellular response to amino acid availability through regulation of the non-canonical mTORC1 signaling cascade controlling the MiT/TFE factors TFEB and TFE3. Activates mTORC1 by acting as a GTPase-activating protein: specifically stimulates GTP hydrolysis by RagC/RRAGC or RagD/RRAGD, promoting the conversion to the GDP-bound state of RagC/RRAGC or RagD/RRAGD, and thereby activating the kinase activity of mTORC1. The GTPase-activating activity is inhibited during starvation and activated in presence of nutrients. Acts as a key component for non-canonical mTORC1-dependent control of the MiT/TFE factors TFEB and TFE3, while it is not involved in mTORC1-dependent phosphorylation of canonical RPS6KB1/S6K1 and EIF4EBP1/4E-BP1. In low-amino acid conditions, the lysosomal folliculin complex (LFC) is formed on the membrane of lysosomes, which inhibits the GTPase-activating activity of FLCN, inactivates mTORC1 and maximizes nuclear translocation of TFEB and TFE3. Upon amino acid restimulation, RagA/RRAGA (or RagB/RRAGB) nucleotide exchange promotes disassembly of the LFC complex and liberates the GTPase-activating activity of FLCN, leading to activation of mTORC1 and subsequent cytoplasmic retention of TFEB and TFE3. Indirectly acts as a positive regulator of Wnt signaling by promoting mTOR-dependent cytoplasmic retention of MiT/TFE factor TFE3. Required for the exit of hematopoietic stem cell from pluripotency by promoting mTOR-dependent cytoplasmic retention of TFE3, thereby increasing Wnt signaling. Involved in the control of embryonic stem cells differentiation; together with LAMTOR1 it is necessary to recruit and activate RagC/RRAGC and RagD/RRAGD at the lysosomes, and to induce exit of embryonic stem cells from pluripotency via non-canonical, mTOR-independent TFE3 inactivation. Acts as an inhibitor of browning of adipose tissue by regulating mTOR-dependent cytoplasmic retention of TFE3. In response to flow stress, regulates STK11/LKB1 accumulation and mTORC1 activation through primary cilia: may act by recruiting STK11/LKB1 to primary cilia for activation of AMPK resided at basal bodies, causing mTORC1 down-regulation. Together with FNIP1 and/or FNIP2, regulates autophagy: following phosphorylation by ULK1, interacts with GABARAP and promotes autophagy. Required for starvation-induced perinuclear clustering of lysosomes by promoting association of RILP with its effector RAB34. Regulates glycolysis by binding to lactate dehydrogenase LDHA, acting as an uncompetitive inhibitor. The chain is Folliculin from Bos taurus (Bovine).